The chain runs to 329 residues: MNQIDYLRISLIDRCNFRCQYCLPEDAELAYVRPQDLLTREEILTLVKNVFIPLGFRKFRLTGGEPLLHPEVVEIVRDIASLSATSDLALTTNGYLLDNLAEMLYEAGLRRINISLDSLDPDTFDKIIGNRGRSRWQKTWAGIQAAQRVGFDPLKLNVVVIPGINEAEVEDLAALTIEKRWHVRFIEFMPIGNGDLFQEKAWIANEELRGRIRAKWGLNEGQVRGNGPADVFQIPGAKGTIGFISQMSECFCDRCNRLRLSADGWLRPCLLNETGQIDLKTALRQGISPAEIRERVRELIELKAEINFKLRDSGTSSGIYTRTMSQIGG.

The region spanning 1–229 is the Radical SAM core domain; that stretch reads MNQIDYLRIS…EGQVRGNGPA (229 aa). Residue Arg8 coordinates GTP. The [4Fe-4S] cluster site is built by Cys15 and Cys19. Tyr21 provides a ligand contact to S-adenosyl-L-methionine. Cys22 contributes to the [4Fe-4S] cluster binding site. Arg60 is a GTP binding site. Gly64 lines the S-adenosyl-L-methionine pocket. Thr91 provides a ligand contact to GTP. Ser115 contributes to the S-adenosyl-L-methionine binding site. Lys155 is a binding site for GTP. Met189 contributes to the S-adenosyl-L-methionine binding site. 2 residues coordinate [4Fe-4S] cluster: Cys252 and Cys255. 257-259 serves as a coordination point for GTP; the sequence is RLR. Cys269 contacts [4Fe-4S] cluster.

Belongs to the radical SAM superfamily. MoaA family. In terms of assembly, monomer and homodimer. [4Fe-4S] cluster is required as a cofactor.

The catalysed reaction is GTP + AH2 + S-adenosyl-L-methionine = (8S)-3',8-cyclo-7,8-dihydroguanosine 5'-triphosphate + 5'-deoxyadenosine + L-methionine + A + H(+). It participates in cofactor biosynthesis; molybdopterin biosynthesis. In terms of biological role, catalyzes the cyclization of GTP to (8S)-3',8-cyclo-7,8-dihydroguanosine 5'-triphosphate. This chain is GTP 3',8-cyclase, found in Microcystis aeruginosa (strain NIES-843 / IAM M-2473).